The following is a 128-amino-acid chain: Large ribosomal subunit protein uL24 (128 aa).

Residues 105–128 are disordered; sequence KAKSRQVGKEKGKYKEETIEKMQE.

Belongs to the universal ribosomal protein uL24 family. As to quaternary structure, component of the large ribosomal subunit.

The protein localises to the cytoplasm. Component of the large ribosomal subunit. The ribosome is a large ribonucleoprotein complex responsible for the synthesis of proteins in the cell. The chain is Large ribosomal subunit protein uL24 (RPL26) from Gallus gallus (Chicken).